The sequence spans 101 residues: Replication restart protein PriB (101 aa).

One can recognise an SSB domain in the interval 1 to 101 (MTTNNLVLAG…LHAENVELKT (101 aa)).

The protein belongs to the PriB family. As to quaternary structure, homodimer. Interacts with PriA and DnaT. Component of the replication restart primosome. Primosome assembly occurs via a 'hand-off' mechanism. PriA binds to replication forks, subsequently PriB then DnaT bind; DnaT then displaces ssDNA to generate the helicase loading substrate.

Functionally, involved in the restart of stalled replication forks, which reloads the replicative helicase on sites other than the origin of replication; the PriA-PriB pathway is the major replication restart pathway. During primosome assembly it facilitates complex formation between PriA and DnaT on DNA; stabilizes PriA on DNA. Stimulates the DNA unwinding activity of PriA helicase. This Shewanella piezotolerans (strain WP3 / JCM 13877) protein is Replication restart protein PriB.